Consider the following 154-residue polypeptide: NADPH-dependent 7-cyano-7-deazaguanine reductase (154 aa).

C52 functions as the Thioimide intermediate in the catalytic mechanism. D59 functions as the Proton donor in the catalytic mechanism. Substrate-binding positions include 74–76 and 93–94; these read VES and HE.

It belongs to the GTP cyclohydrolase I family. QueF type 1 subfamily.

The protein localises to the cytoplasm. It catalyses the reaction 7-aminomethyl-7-carbaguanine + 2 NADP(+) = 7-cyano-7-deazaguanine + 2 NADPH + 3 H(+). It functions in the pathway tRNA modification; tRNA-queuosine biosynthesis. Catalyzes the NADPH-dependent reduction of 7-cyano-7-deazaguanine (preQ0) to 7-aminomethyl-7-deazaguanine (preQ1). This Rhizobium rhizogenes (strain K84 / ATCC BAA-868) (Agrobacterium radiobacter) protein is NADPH-dependent 7-cyano-7-deazaguanine reductase.